A 493-amino-acid chain; its full sequence is NAD(P)H-quinone oxidoreductase chain 4, chloroplastic (493 aa).

The next 14 membrane-spanning stretches (helical) occupy residues 4–24 (FPWL…IPLL), 34–54 (WYTL…FGYY), 87–107 (MGLI…AWPI), 111–131 (PKLF…LFTS), 134–154 (LFLF…LISL), 167–187 (FIFY…TVCF), 212–232 (ILYL…PFHT), 242–262 (HYST…YGWI), 276–296 (FAPW…SVCL), 313–333 (MGFV…GAIC), 334–354 (QMIS…TTYD), 385–405 (SLAL…LGII), 417–437 (FIIL…LSML), and 462–482 (VFII…PNIL).

It belongs to the complex I subunit 4 family.

The protein resides in the plastid. It is found in the chloroplast thylakoid membrane. The catalysed reaction is a plastoquinone + NADH + (n+1) H(+)(in) = a plastoquinol + NAD(+) + n H(+)(out). It catalyses the reaction a plastoquinone + NADPH + (n+1) H(+)(in) = a plastoquinol + NADP(+) + n H(+)(out). The protein is NAD(P)H-quinone oxidoreductase chain 4, chloroplastic of Chara vulgaris (Common stonewort).